A 205-amino-acid polypeptide reads, in one-letter code: Thymidine kinase (205 aa).

ATP-binding positions include 9–16 and 87–90; these read SAMNAGKS and DESQ. The active-site Proton acceptor is glutamate 88. Positions 145, 147, 182, and 185 each coordinate Zn(2+).

The protein belongs to the thymidine kinase family. As to quaternary structure, homotetramer.

Its subcellular location is the cytoplasm. The catalysed reaction is thymidine + ATP = dTMP + ADP + H(+). The chain is Thymidine kinase from Salmonella choleraesuis (strain SC-B67).